The sequence spans 241 residues: Translation initiation factor IF-3 (241 aa).

Over residues 193–203 (AAEKARQKAIQ) the composition is skewed to basic and acidic residues. The disordered stretch occupies residues 193–241 (AAEKARQKAIQEGRAAPAQDDTEDEEIEKLERELEEQDDEDDDEAEATE). Residues 212–241 (DDTEDEEIEKLERELEEQDDEDDDEAEATE) are compositionally biased toward acidic residues.

The protein belongs to the IF-3 family. As to quaternary structure, monomer.

It localises to the cytoplasm. In terms of biological role, IF-3 binds to the 30S ribosomal subunit and shifts the equilibrium between 70S ribosomes and their 50S and 30S subunits in favor of the free subunits, thus enhancing the availability of 30S subunits on which protein synthesis initiation begins. This Sorangium cellulosum (strain So ce56) (Polyangium cellulosum (strain So ce56)) protein is Translation initiation factor IF-3.